Here is a 230-residue protein sequence, read N- to C-terminus: Ribonuclease 3 (230 aa).

Residues 5–125 (YSRFYNILGY…VIGAIYLDSD (121 aa)) form the RNase III domain. A Mg(2+)-binding site is contributed by E40. The active site involves D44. Mg(2+) contacts are provided by D111 and E114. The active site involves E114. Residues 153-223 (DSKSKLQEIL…AEKMIEMLSQ (71 aa)) form the DRBM domain.

It belongs to the ribonuclease III family. Homodimer. Mg(2+) serves as cofactor.

The protein resides in the cytoplasm. The enzyme catalyses Endonucleolytic cleavage to 5'-phosphomonoester.. Digests double-stranded RNA. Involved in the processing of primary rRNA transcript to yield the immediate precursors to the large and small rRNAs (23S and 16S). Processes some mRNAs, and tRNAs when they are encoded in the rRNA operon. Processes pre-crRNA and tracrRNA of type II CRISPR loci if present in the organism. This Francisella tularensis subsp. tularensis (strain FSC 198) protein is Ribonuclease 3.